The following is a 385-amino-acid chain: S-adenosylmethionine synthase (385 aa).

His-16 is an ATP binding site. Residue Asp-18 participates in Mg(2+) binding. K(+) is bound at residue Glu-44. 2 residues coordinate L-methionine: Glu-57 and Gln-100. Residues 100–110 (QSPDINQGVDR) form a flexible loop region. Residues 164–166 (DGK), 230–231 (KF), Asp-239, 245–246 (RK), Ala-262, and Lys-266 contribute to the ATP site. Asp-239 lines the L-methionine pocket. Lys-270 is an L-methionine binding site.

It belongs to the AdoMet synthase family. As to quaternary structure, homotetramer; dimer of dimers. Mg(2+) is required as a cofactor. K(+) serves as cofactor.

The protein localises to the cytoplasm. It catalyses the reaction L-methionine + ATP + H2O = S-adenosyl-L-methionine + phosphate + diphosphate. It functions in the pathway amino-acid biosynthesis; S-adenosyl-L-methionine biosynthesis; S-adenosyl-L-methionine from L-methionine: step 1/1. Functionally, catalyzes the formation of S-adenosylmethionine (AdoMet) from methionine and ATP. The overall synthetic reaction is composed of two sequential steps, AdoMet formation and the subsequent tripolyphosphate hydrolysis which occurs prior to release of AdoMet from the enzyme. The protein is S-adenosylmethionine synthase of Helicobacter pylori (strain J99 / ATCC 700824) (Campylobacter pylori J99).